A 295-amino-acid chain; its full sequence is UDP-N-acetylenolpyruvoylglucosamine reductase (295 aa).

Residues 23 to 188 form the FAD-binding PCMH-type domain; that stretch reads KVGGPADFLA…ISAKFALKPG (166 aa). Arg167 is an active-site residue. The active-site Proton donor is Ser217. Residue Glu287 is part of the active site.

The protein belongs to the MurB family. It depends on FAD as a cofactor.

The protein localises to the cytoplasm. It catalyses the reaction UDP-N-acetyl-alpha-D-muramate + NADP(+) = UDP-N-acetyl-3-O-(1-carboxyvinyl)-alpha-D-glucosamine + NADPH + H(+). Its pathway is cell wall biogenesis; peptidoglycan biosynthesis. Its function is as follows. Cell wall formation. This Streptococcus pyogenes serotype M12 (strain MGAS9429) protein is UDP-N-acetylenolpyruvoylglucosamine reductase.